Consider the following 579-residue polypeptide: Folliculin (579 aa).

Positions 32–82 (GAGSGDSPGQVEQAEEEEGGIQMSSRVRAHSPAEGASTDSSSPGPKKSDMC) are disordered. 2 positions are modified to phosphoserine: Ser-62 and Ser-73. Residues 86 to 242 (RSLAVGHPGY…RNGNAARSLT (157 aa)) enclose the uDENN FLCN/SMCR8-type domain. A coiled-coil region spans residues 287 to 310 (EKLADLEEESESWDNSEAEEEEKA). A compositionally biased stretch (acidic residues) spans 294-308 (EESESWDNSEAEEEE). A disordered region spans residues 294–320 (EESESWDNSEAEEEEKAPATAEGAEGR). A phosphoserine mark is found at Ser-302, Ser-406, Ser-537, Ser-542, and Ser-571. Residues 339–491 (QPPKLSVFKS…ILNKMEAALT (153 aa)) form the cDENN FLCN/SMCR8-type domain. Positions 493–558 (QNLSVDVVDQ…LLKFWMTGLS (66 aa)) constitute a dDENN FLCN/SMCR8-type domain.

Belongs to the folliculin family. As to quaternary structure, interacts (via C-terminus) with FNIP1 or FNIP2 (via C-terminus). Component of the lysosomal folliculin complex (LFC), composed of FLCN, FNIP1 (or FNIP2), RagA/RRAGA or RagB/RRAGB GDP-bound, RagC/RRAGC or RagD/RRAGD GTP-bound, and Ragulator. Interaction with FNIP1 or FNIP2 mediates indirect interaction with the PRKAA1, PRKAB1 and PRKAG1 subunits of 5'-AMP-activated protein kinase (AMPK). Interacts with HSP90AA1 in the presence of FNIP1. Interacts with HSP70, STUB1, CDC37, AHSA1, CCT2, STIP1, PTGES3 and PPP5C. Interacts with GABARAP; interaction takes place in the presence of FNIP1 and/or FNIP2. Interacts with RILP; the interaction is direct and promotes association between RILP and RAB34. Interacts with KIF3A and KIF3B. Interacts with lactate dehydrogenase LDHA, but not LDHB; the interaction is direct, may preferentially bind LDHA dimers rather than tetramers, and regulates LDHA activity, acting as an uncompetitive inhibitor. Post-translationally, phosphorylation by ULK1 modulates the interaction with GABARAP and is required to regulate autophagy. In terms of tissue distribution, expressed in kidney.

The protein resides in the lysosome membrane. It localises to the cytoplasm. The protein localises to the cytosol. Its subcellular location is the cell projection. It is found in the cilium. The protein resides in the cytoskeleton. It localises to the microtubule organizing center. The protein localises to the centrosome. Its subcellular location is the spindle. It is found in the nucleus. GTPase-activating activity is inhibited in the folliculin complex (LFC), which stabilizes the GDP-bound state of RagA/RRAGA (or RagB/RRAGB), because Arg-164 is located far from the RagC/RRAGC or RagD/RRAGD nucleotide pocket. Disassembly of the LFC complex upon amino acid restimulation liberates the GTPase-activating activity. In terms of biological role, multi-functional protein, involved in both the cellular response to amino acid availability and in the regulation of glycolysis. GTPase-activating protein that plays a key role in the cellular response to amino acid availability through regulation of the non-canonical mTORC1 signaling cascade controlling the MiT/TFE factors TFEB and TFE3. Activates mTORC1 by acting as a GTPase-activating protein: specifically stimulates GTP hydrolysis by RagC/RRAGC or RagD/RRAGD, promoting the conversion to the GDP-bound state of RagC/RRAGC or RagD/RRAGD, and thereby activating the kinase activity of mTORC1. The GTPase-activating activity is inhibited during starvation and activated in presence of nutrients. Acts as a key component for non-canonical mTORC1-dependent control of the MiT/TFE factors TFEB and TFE3, while it is not involved in mTORC1-dependent phosphorylation of canonical RPS6KB1/S6K1 and EIF4EBP1/4E-BP1. In low-amino acid conditions, the lysosomal folliculin complex (LFC) is formed on the membrane of lysosomes, which inhibits the GTPase-activating activity of FLCN, inactivates mTORC1 and maximizes nuclear translocation of TFEB and TFE3. Upon amino acid restimulation, RagA/RRAGA (or RagB/RRAGB) nucleotide exchange promotes disassembly of the LFC complex and liberates the GTPase-activating activity of FLCN, leading to activation of mTORC1 and subsequent cytoplasmic retention of TFEB and TFE3. Indirectly acts as a positive regulator of Wnt signaling by promoting mTOR-dependent cytoplasmic retention of MiT/TFE factor TFE3. Required for the exit of hematopoietic stem cell from pluripotency by promoting mTOR-dependent cytoplasmic retention of TFE3, thereby increasing Wnt signaling. Involved in the control of embryonic stem cells differentiation; together with LAMTOR1 it is necessary to recruit and activate RagC/RRAGC and RagD/RRAGD at the lysosomes, and to induce exit of embryonic stem cells from pluripotency via non-canonical, mTOR-independent TFE3 inactivation. Acts as an inhibitor of browning of adipose tissue by regulating mTOR-dependent cytoplasmic retention of TFE3. In response to flow stress, regulates STK11/LKB1 accumulation and mTORC1 activation through primary cilia: may act by recruiting STK11/LKB1 to primary cilia for activation of AMPK resided at basal bodies, causing mTORC1 down-regulation. Together with FNIP1 and/or FNIP2, regulates autophagy: following phosphorylation by ULK1, interacts with GABARAP and promotes autophagy. Required for starvation-induced perinuclear clustering of lysosomes by promoting association of RILP with its effector RAB34. Regulates glycolysis by binding to lactate dehydrogenase LDHA, acting as an uncompetitive inhibitor. The protein is Folliculin of Rattus norvegicus (Rat).